A 290-amino-acid polypeptide reads, in one-letter code: ATP synthase gamma chain (290 aa).

This sequence belongs to the ATPase gamma chain family. In terms of assembly, F-type ATPases have 2 components, CF(1) - the catalytic core - and CF(0) - the membrane proton channel. CF(1) has five subunits: alpha(3), beta(3), gamma(1), delta(1), epsilon(1). CF(0) has three main subunits: a, b and c.

The protein localises to the cell membrane. Produces ATP from ADP in the presence of a proton gradient across the membrane. The gamma chain is believed to be important in regulating ATPase activity and the flow of protons through the CF(0) complex. The sequence is that of ATP synthase gamma chain from Buchnera aphidicola subsp. Diuraphis noxia.